The primary structure comprises 180 residues: Oligoribonuclease (180 aa).

An Exonuclease domain is found at 7 to 170 (LIWIDLEMTG…SDIQDSIDEL (164 aa)). Tyr-128 is a catalytic residue.

This sequence belongs to the oligoribonuclease family.

It localises to the cytoplasm. Its function is as follows. 3'-to-5' exoribonuclease specific for small oligoribonucleotides. In Ruthia magnifica subsp. Calyptogena magnifica, this protein is Oligoribonuclease.